The primary structure comprises 277 residues: Shikimate dehydrogenase (NADP(+)) (277 aa).

Shikimate is bound by residues 18–20 and T65; that span reads SKS. Residue K69 is the Proton acceptor of the active site. An NADP(+)-binding site is contributed by E81. Positions 90 and 106 each coordinate shikimate. NADP(+)-binding positions include 130 to 134, 154 to 159, and M217; these read GAGGA and NRTFSK. Position 219 (Y219) interacts with shikimate. G241 provides a ligand contact to NADP(+).

The protein belongs to the shikimate dehydrogenase family. Homodimer.

It catalyses the reaction shikimate + NADP(+) = 3-dehydroshikimate + NADPH + H(+). The protein operates within metabolic intermediate biosynthesis; chorismate biosynthesis; chorismate from D-erythrose 4-phosphate and phosphoenolpyruvate: step 4/7. Involved in the biosynthesis of the chorismate, which leads to the biosynthesis of aromatic amino acids. Catalyzes the reversible NADPH linked reduction of 3-dehydroshikimate (DHSA) to yield shikimate (SA). In Vibrio vulnificus (strain CMCP6), this protein is Shikimate dehydrogenase (NADP(+)).